The chain runs to 364 residues: Serpentine receptor class epsilon-27 (364 aa).

The next 7 membrane-spanning stretches (helical) occupy residues 31–51 (VIAS…VVSL), 64–84 (FIIL…GKLI), 125–145 (LLII…FGAV), 167–187 (IFIP…CSCL), 195–215 (IITI…VFFL), 257–277 (LIFS…TLLL), and 290–310 (NALF…IPAW).

The protein belongs to the nematode receptor-like protein sre family.

The protein resides in the membrane. This chain is Serpentine receptor class epsilon-27 (sre-27), found in Caenorhabditis elegans.